We begin with the raw amino-acid sequence, 235 residues long: Probable 2-phosphosulfolactate phosphatase (235 aa).

Belongs to the ComB family. Mg(2+) is required as a cofactor.

The enzyme catalyses (2R)-O-phospho-3-sulfolactate + H2O = (2R)-3-sulfolactate + phosphate. The protein is Probable 2-phosphosulfolactate phosphatase of Clostridium novyi (strain NT).